The sequence spans 286 residues: Alpha/beta-gliadin (286 aa).

The N-terminal stretch at 1-20 is a signal peptide; it reads MKTFLILVLLAIVATTATTA. The interval 51–120 is disordered; the sequence is LGQQQPFPPQ…QQPISQQQQQ (70 aa). Pro residues predominate over residues 56–71; sequence PFPPQQPYPQPQPFPS. Over residues 72–92 the composition is skewed to low complexity; sequence QLPYLQLQPFPQPQLPYSQPQ. Over residues 93–104 the composition is skewed to pro residues; it reads PFRPQQPYPQPQ. The span at 105 to 120 shows a compositional bias: low complexity; sequence PQYSQPQQPISQQQQQ.

It belongs to the gliadin/glutenin family. Post-translationally, substrate of transglutaminase.

Gliadin is the major seed storage protein in wheat. The sequence is that of Alpha/beta-gliadin from Triticum aestivum (Wheat).